The primary structure comprises 861 residues: MKNDNRIIKNTIKQFKEKLCKDFSQKANITSITRKLAVFIDTILIQLFIKNKLHFGDNFCLLALGSYGRRELQLHSDIDLLILHTEKVSNIQLQRAQKFIQDCWDVGLEVSHQITTVSSCANLASQDLSVISTIMDMFLLCGHGALMEELIYQTHTLHMWPSHQYFFAKLQEQQNRYAKYGETAYNLEPNIKNGPGGLRDLQILLSISKRHFKIKKLAEGIGYGFITDKEYEELKYCQNFLWRVRFALHMLAGKPEERLSFDYQVKLAQFFGYQDQSHILAIEQFMKDYFKVIKRNRELNEMLLQWFNETIVYHQKQKIIRLDDEFQLSNRFIEVRNNRVFKQNPQSILKLFYWLVKRPDIEGVRASTIRLIRESLFLMGKRFRESKETANIFINIFRTGNDPYDALQRMNRYGVLAHYLDCFATATGQMQYDLFHAYTVDQHTLFVIRNISRFKKNEYAKQFPLCAKIITALEKPEILYLGALFHDIAKGRGGDHSELGAIEAQQFTQRHYMEAEDSKLIVWLVRYHLLMSQTAQRKDIYDPKTIEQFCQLLPHARYLDYLYLLTVADICGTNPTLWNAWKDSLLKELYHAAKTRLHKQQELLDEAALISIRKQYAMDILISDGISSRVIQDLWSQFKGKYFLHESPEVIARHTKAILNSKQFPVVIIMPHHSQGGTEVFIYMPHKDERFTITTSVLSNHHVTIQEAAIITCDNQFDLDTYIILDENNQAFLNEQRARDIQKNLCDHLANTGRLPAVSRRRLSRALTHFNVKTQINFIDDNTNHQTQLFLVTNDRPGLLATISRVFLTLNIHLHNAKIATAGERVEDMFYISNQTGYSLNHEEKTILKEKLILEISKSKY.

The interval 1-321 (MKNDNRIIKN…VYHQKQKIIR (321 aa)) is uridylyltransferase. Positions 322–678 (LDDEFQLSNR…IMPHHSQGGT (357 aa)) are uridylyl-removing. Residues 440–562 (VDQHTLFVIR…LPHARYLDYL (123 aa)) enclose the HD domain. ACT domains follow at residues 679–760 (EVFI…AVSR) and 788–861 (QLFL…KSKY).

Belongs to the GlnD family. The cofactor is Mg(2+).

It carries out the reaction [protein-PII]-L-tyrosine + UTP = [protein-PII]-uridylyl-L-tyrosine + diphosphate. The catalysed reaction is [protein-PII]-uridylyl-L-tyrosine + H2O = [protein-PII]-L-tyrosine + UMP + H(+). Its activity is regulated as follows. Uridylyltransferase (UTase) activity is inhibited by glutamine, while glutamine activates uridylyl-removing (UR) activity. Modifies, by uridylylation and deuridylylation, the PII regulatory proteins (GlnB and homologs), in response to the nitrogen status of the cell that GlnD senses through the glutamine level. Under low glutamine levels, catalyzes the conversion of the PII proteins and UTP to PII-UMP and PPi, while under higher glutamine levels, GlnD hydrolyzes PII-UMP to PII and UMP (deuridylylation). Thus, controls uridylylation state and activity of the PII proteins, and plays an important role in the regulation of nitrogen assimilation and metabolism. This chain is Bifunctional uridylyltransferase/uridylyl-removing enzyme, found in Legionella pneumophila (strain Corby).